Here is a 140-residue protein sequence, read N- to C-terminus: Probable prefoldin subunit 6 (140 aa).

This sequence belongs to the prefoldin subunit beta family. As to quaternary structure, heterohexamer of two PFD-alpha type and four PFD-beta type subunits.

In terms of biological role, binds specifically to cytosolic chaperonin (c-CPN) and transfers target proteins to it. Binds to nascent polypeptide chain and promotes folding in an environment in which there are many competing pathways for nonnative proteins. In Dictyostelium discoideum (Social amoeba), this protein is Probable prefoldin subunit 6 (pfdn6).